Here is a 346-residue protein sequence, read N- to C-terminus: Short-wave-sensitive opsin 1 (346 aa).

The Extracellular segment spans residues 1–31 (MSGEDEFYLFQNISSVGPWDGPQYHIAPVWA). Residue N12 is glycosylated (N-linked (GlcNAc...) asparagine). The helical transmembrane segment at 32–56 (FHLQAAFMGFVFFAGTPLNATVLVA) threads the bilayer. Topologically, residues 57-68 (TLHYKKLRQPLN) are cytoplasmic. The helical transmembrane segment at 69-94 (YILVNVSLGGFLFCIFSVFTVFIASC) threads the bilayer. At 95–108 (HGYFLFGRHVCALE) the chain is on the extracellular side. A disulfide bridge links C105 with C182. A helical membrane pass occupies residues 109-128 (AFLGSVAGLVTGWSLAFLAF). Topologically, residues 129–147 (ERYLVICKPFGNIRFNSKH) are cytoplasmic. The chain crosses the membrane as a helical span at residues 148-171 (ALTVVLITWTIGIGVSIPPFFGWS). Residues 172 to 197 (RFIPEGLQCSCGPDWYTVGTKYRSEH) are Extracellular-facing. The chain crosses the membrane as a helical span at residues 198 to 225 (YTWFLFIFCFIIPLSLICFSYFQLLRTL). Topologically, residues 226-247 (RAVAAQQQESATTQKAEREVSH) are cytoplasmic. A helical membrane pass occupies residues 248 to 271 (MVVVMVGSFCLCYVPYAALAMYMV). The Extracellular portion of the chain corresponds to 272–279 (NNRNHGLY). A helical membrane pass occupies residues 280 to 304 (LRLVTIPAFFSKSSCVYNPIIYCFM). An N6-(retinylidene)lysine modification is found at K291. The Cytoplasmic segment spans residues 305-346 (NKQFRACILEMVCRKPMTDESDMSGSQKTEVSTVSSSKVGPH). The disordered stretch occupies residues 322-346 (TDESDMSGSQKTEVSTVSSSKVGPH). The segment covering 330-346 (SQKTEVSTVSSSKVGPH) has biased composition (low complexity).

This sequence belongs to the G-protein coupled receptor 1 family. Opsin subfamily. In terms of processing, phosphorylated on some or all of the serine and threonine residues present in the C-terminal region. As to expression, expressed in cone photoreceptor cells.

The protein localises to the cell membrane. Its subcellular location is the photoreceptor inner segment. The protein resides in the cell projection. It localises to the cilium. It is found in the photoreceptor outer segment. The protein localises to the cytoplasm. Its subcellular location is the perinuclear region. Functionally, visual pigments are the light-absorbing molecules that mediate vision. They consist of an apoprotein, opsin, covalently linked to cis-retinal. Required for the maintenance of cone outer segment organization in the ventral retina, but not essential for the maintenance of functioning cone photoreceptors. Involved in ensuring correct abundance and localization of retinal membrane proteins. May increase spectral sensitivity in dim light. The chain is Short-wave-sensitive opsin 1 (Opn1sw) from Rattus norvegicus (Rat).